Consider the following 456-residue polypeptide: MTHQVHIIGGGMAGTEAAWQLARRGIRVRLSEMRGGGDTTPAHNGDGLAELVCSNSFRSDDDEKNAVGLLHYEMRQCDSLLMAAAAKARVPAGSALAVDRDVFSAEVEAALRAQPTLEIVRERVDVLPSDGLTIVATGPLTAPSLANSIGSATGADSLAFFDAIAPIVYRDSIDMGVAWMASRWDKGAEASLAMGGDGRDYINCPMTRDQYLAFREELLAGEKTEFKEWEANTPYFDGCMPIEVMAARGEETLRFGPMKPVGLDNPHWATAEHPNGRWPYAVVQLRQDNKLGTLWNMVGFQTKLKHAEQVRVFRTIPGLENAEFARLGGLHRNTFLNSPTLLDRQLRLKSAPNVRFAGQITGCEGYVESGSVGMLAGLMVAAQIAGLDWSPPPRTTALGALLAHITGDAEAESFQPMNVNFGLFSPVDASVKKKVRKEAYTARAKADLSDWIATLA.

An FAD-binding site is contributed by 9–14; the sequence is GGGMAG.

It belongs to the MnmG family. TrmFO subfamily. FAD is required as a cofactor.

It is found in the cytoplasm. The enzyme catalyses uridine(54) in tRNA + (6R)-5,10-methylene-5,6,7,8-tetrahydrofolate + NADH + H(+) = 5-methyluridine(54) in tRNA + (6S)-5,6,7,8-tetrahydrofolate + NAD(+). It carries out the reaction uridine(54) in tRNA + (6R)-5,10-methylene-5,6,7,8-tetrahydrofolate + NADPH + H(+) = 5-methyluridine(54) in tRNA + (6S)-5,6,7,8-tetrahydrofolate + NADP(+). Its function is as follows. Catalyzes the folate-dependent formation of 5-methyl-uridine at position 54 (M-5-U54) in all tRNAs. The chain is Methylenetetrahydrofolate--tRNA-(uracil-5-)-methyltransferase TrmFO from Novosphingobium aromaticivorans (strain ATCC 700278 / DSM 12444 / CCUG 56034 / CIP 105152 / NBRC 16084 / F199).